Consider the following 360-residue polypeptide: Peptide chain release factor 1 (360 aa).

Residue Q235 is modified to N5-methylglutamine. A disordered region spans residues 285–313; the sequence is KRQQAEASTRRNLLGSGDRSDRNRTYNFP.

It belongs to the prokaryotic/mitochondrial release factor family. Post-translationally, methylated by PrmC. Methylation increases the termination efficiency of RF1.

Its subcellular location is the cytoplasm. Its function is as follows. Peptide chain release factor 1 directs the termination of translation in response to the peptide chain termination codons UAG and UAA. The sequence is that of Peptide chain release factor 1 from Shigella boydii serotype 18 (strain CDC 3083-94 / BS512).